A 1100-amino-acid polypeptide reads, in one-letter code: MSQLFYQGDSDDELQEELTRQTTQASQSSKIKNEDEPDDSNHLNEVENEDSKVLDDDAVLYPLIPNEPDDIETSKPNINDIRPVDIQLTLPLPFQQKVVENSLITEDALIIMGKGLGLLDIVANLLHVLATPTSINGQLKRALVLVLNAKPIDNVRIKEALEELSWFSNTGKDDDDTAVESDDELFERPFNVVTADSLSIEKRRKLYISGGILSITSRILIVDLLSGIVHPNRVTGMLVLNADSLRHNSNESFILEIYRSKNTWGFIKAFSEAPETFVMEFSPLRTKMKELRLKNVLLWPRFRVEVSSCLNATNKTSHNKVIEVKVSLTNSMSQIQFGLMECLKKCIAELSRKNPELALDWWNMENVLDINFIRSIDSVMVPNWHRISYESKQLVKDIRFLRHLLKMLVTSDAVDFFGEIQLSLDANKPSVSRKYSESPWLLVDEAQLVISYAKKRIFYKNEYTLEENPKWEQLIHILHDISHERMTNHLQGPTLVACSDNLTCLELAKVLNASNKKRGVRQVLLNKLKWYRKQREETKKLVKEVQSQDTFPENATLNVSSTFSKEQVTTKRRRTRGASQVAAVEKLRNAGTNVDMEVVFEDHKLSEEIKKGSGDDLDDGQEENAANDSKIFEIQEQENEILIDDGDAEFDNGELEYVGDLPQHITTHFNKDLWAEHCNEYEYVDRQDEILISTFKSLNDNCSLQEMMPSYIIMFEPDISFIRQIEVYKAIVKDLQPKVYFMYYGESIEEQSHLTAIKREKDAFTKLIRENANLSHHFETNEDLSHYKNLAERKLKLSKLRKSNTRNAGGQQGFHNLTQDVVIVDTREFNASLPGLLYRYGIRVIPCMLTVGDYVITPDICLERKSISDLIGSLQNNRLANQCKKMLKYYAYPTLLIEFDEGQSFSLEPFSERRNYKNKDISTVHPISSKLSQDEIQLKLAKLVLRFPTLKIIWSSSPLQTVNIILELKLGREQPDPSNAVILGTNKVRSDFNSTAKGLKDGDNESKFKRLLNVPGVSKIDYFNLRKKIKSFNKLQKLSWNEINELINDEDLTDRIYYFLRTEKEEQEQESTDENLESPGKTTDDNALHDHHNDVPEAPV.

The segment at 1–47 is disordered; the sequence is MSQLFYQGDSDDELQEELTRQTTQASQSSKIKNEDEPDDSNHLNEVE. Positions 20-30 are enriched in polar residues; it reads RQTTQASQSSK. Positions 31-47 are enriched in basic and acidic residues; that stretch reads IKNEDEPDDSNHLNEVE. Ser-613 is modified (phosphoserine). An ERCC4 domain is found at 821–901; that stretch reads VVIVDTREFN…YPTLLIEFDE (81 aa). Positions 1063-1100 are disordered; the sequence is EKEEQEQESTDENLESPGKTTDDNALHDHHNDVPEAPV. The span at 1065 to 1076 shows a compositional bias: acidic residues; sequence EEQEQESTDENL. Ser-1071 is modified (phosphoserine). Thr-1072 is subject to Phosphothreonine. Over residues 1082–1100 the composition is skewed to basic and acidic residues; the sequence is TTDDNALHDHHNDVPEAPV.

This sequence belongs to the XPF family. Component of the nucleotide excision repair factor 1 (NEF1) complex consisting of RAD1, RAD10 and RAD14. Interacts with SAW1.

The protein resides in the nucleus. Functionally, involved in nucleotide excision repair of DNA damaged with UV light, bulky adducts, or cross-linking agents. Along with RAD10 forms an endonuclease that specifically degrades single-stranded DNA. This chain is DNA repair protein RAD1 (RAD1), found in Saccharomyces cerevisiae (strain ATCC 204508 / S288c) (Baker's yeast).